A 584-amino-acid chain; its full sequence is MATRRRSFPLVPLLLFLLAAAAYGRLISDGSPASASATSLLSNPVSAVIRLTTSNSASASSPPAAAPEEKCEQSYGFLPCTTTVLGNLFLVLAYGFLMYKAATFLSAGSELLLEIMGPGLVGGLLLPILGALPDALLVLVSGLSGSRETAQSQVLIGMGLLAGSTVFLLTLLWGTCVVVGKCDIGPNGVAVDLQNNKGFSLTGTGISTDVQTSYAARIMGISVIPFIIAQFPKMLKTHHGQRLAVLLALIVSFSLVLAYCLYQVFQPWIQKRKLAYAKHKHVISGILRHAQMEALGRLLNEDGTPNEDVIKKLFHKIDMDESQTLSRAELHALIIGINFEEVDFDKNDAVDKIMDDFDTSGNDIVEEAEFVSGMKRWLNEAKRSVPTSGAYSNKFITDYHARTRQEHDLLVDRSDETVESVENPGWCITKAVGLLLLGSAIAAAFADPLVDAVHNFSNASHIPSFFISFIALPLATNSSEAVSAIIFASRKKLRTSSLTFSEVYGGVTMNNTLCLGVFLALIYIRNLTWDFSSEVLIILLVCVIMGLFTSFRTTFPLWTCLVAYMLYPLSLVVVYILDFVFGWS.

Transmembrane regions (helical) follow at residues 77 to 97, 120 to 140, 154 to 174, 215 to 235, and 245 to 265; these read FLPCTTTVLGNLFLVLAYGFL, LVGGLLLPILGALPDALLVLV, VLIGMGLLAGSTVFLLTLLWG, AARIMGISVIPFIIAQFPKML, and VLLALIVSFSLVLAYCLYQVF. 2 consecutive EF-hand domains span residues 305–340 and 345–380; these read PNEDVIKKLFHKIDMDESQTLSRAELHALIIGINFE and DKNDAVDKIMDDFDTSGNDIVEEAEFVSGMKRWLNE. Asp318, Asp320, Ser322, Thr324, Glu329, Asp358, Ser360, Asn362, and Glu369 together coordinate Ca(2+). The next 5 membrane-spanning stretches (helical) occupy residues 426-446, 466-486, 504-524, 531-551, and 561-581; these read WCITKAVGLLLLGSAIAAAFA, FISFIALPLATNSSEAVSAII, YGGVTMNNTLCLGVFLALIYI, FSSEVLIILLVCVIMGLFTSF, and LVAYMLYPLSLVVVYILDFVF.

The protein belongs to the Ca(2+):cation antiporter (CaCA) (TC 2.A.19) family.

It is found in the cell membrane. In terms of biological role, may function as a sodium/calcium exchanger (NCX) and participate in the maintenance of calcium homeostasis. May play a role abiotic stress responses. The polypeptide is Sodium/calcium exchanger NCL1 (Oryza sativa subsp. japonica (Rice)).